The chain runs to 560 residues: Embryonal Fyn-associated substrate (560 aa).

The 64-residue stretch at 5–68 (TSAQLARALY…PANRVKLLPA (64 aa)) folds into the SH3 domain. Disordered regions lie at residues 176-219 (VVPQ…LYAA) and 241-372 (ANGE…NEYE). Residues 198–210 (AELERDPEWEGGR) are compositionally biased toward basic and acidic residues. Tyrosine 253 is subject to Phosphotyrosine; by SRC. A compositionally biased stretch (pro residues) spans 259-268 (GPEPPSPEPP). 2 consecutive short sequence motifs (SH3-binding) follow at residues 304–310 (RPLPALP) and 334–340 (RPLPPPP). Residues 305–315 (PLPALPVSEAP) show a composition bias toward low complexity. Residues 351–361 (PEGDPECREVA) show a composition bias toward basic and acidic residues. The interval 437-487 (FYAGQCQSHYSALQAAVAALVASTQANQPPCLFVPHGKRVVVAAHRLVFVG) is divergent helix-loop-helix motif.

This sequence belongs to the CAS family. In terms of processing, phosphorylated on multiple tyrosine residues. Phosphorylated on tyrosines by FYN and SRC. In terms of tissue distribution, widely expressed. Higher levels found in placenta and embryo. Lower levels found in brain, brainstem, muscle and lung. No expression in liver and intestine.

Docking protein which plays a central coordinating role for tyrosine-kinase-based signaling related to cell adhesion. May serve as an activator of SRC and a downstream effector. Interacts with the SH3 domain of FYN and with CRK, SRC, and YES. The chain is Embryonal Fyn-associated substrate (Efs) from Mus musculus (Mouse).